A 523-amino-acid chain; its full sequence is DNA primase (523 aa).

A CHC2-type zinc finger spans residues 37-61 (CPFHAEKTPSFFVNPLQGYFYCFGC). The 82-residue stretch at 259 to 340 (KSVILVEGYI…NVSVVRMDFG (82 aa)) folds into the Toprim domain. Mg(2+) contacts are provided by glutamate 265, aspartate 309, and aspartate 311.

The protein belongs to the DnaG primase family. As to quaternary structure, monomer. Interacts with DnaB. Zn(2+) serves as cofactor. The cofactor is Mg(2+).

It carries out the reaction ssDNA + n NTP = ssDNA/pppN(pN)n-1 hybrid + (n-1) diphosphate.. Its function is as follows. RNA polymerase that catalyzes the synthesis of short RNA molecules used as primers for DNA polymerase during DNA replication. The polypeptide is DNA primase (Borreliella burgdorferi (strain ATCC 35210 / DSM 4680 / CIP 102532 / B31) (Borrelia burgdorferi)).